Consider the following 103-residue polypeptide: Small ribosomal subunit protein uS10 (103 aa).

Belongs to the universal ribosomal protein uS10 family. In terms of assembly, part of the 30S ribosomal subunit.

In terms of biological role, involved in the binding of tRNA to the ribosomes. This Chromohalobacter salexigens (strain ATCC BAA-138 / DSM 3043 / CIP 106854 / NCIMB 13768 / 1H11) protein is Small ribosomal subunit protein uS10.